The primary structure comprises 293 residues: Nucleotide-binding protein Dole_0503 (293 aa).

11-18 (GLSGSGKS) provides a ligand contact to ATP. Residue 62 to 65 (DLRE) coordinates GTP.

The protein belongs to the RapZ-like family.

Displays ATPase and GTPase activities. The sequence is that of Nucleotide-binding protein Dole_0503 from Desulfosudis oleivorans (strain DSM 6200 / JCM 39069 / Hxd3) (Desulfococcus oleovorans).